The following is a 271-amino-acid chain: Phosphate import ATP-binding protein PstB 1 (271 aa).

An ABC transporter domain is found at 24–266 (MIGKDVSVYY…PDDPRTQDYI (243 aa)). 56-63 (GPSGCGKS) is a binding site for ATP.

This sequence belongs to the ABC transporter superfamily. Phosphate importer (TC 3.A.1.7) family. In terms of assembly, the complex is composed of two ATP-binding proteins (PstB), two transmembrane proteins (PstC and PstA) and a solute-binding protein (PstS).

It localises to the cell inner membrane. It carries out the reaction phosphate(out) + ATP + H2O = ADP + 2 phosphate(in) + H(+). Its function is as follows. Part of the ABC transporter complex PstSACB involved in phosphate import. Responsible for energy coupling to the transport system. This Rhizobium johnstonii (strain DSM 114642 / LMG 32736 / 3841) (Rhizobium leguminosarum bv. viciae) protein is Phosphate import ATP-binding protein PstB 1.